We begin with the raw amino-acid sequence, 395 residues long: Selection and upkeep of intraepithelial T-cells protein 7 (395 aa).

A signal peptide spans 1–25 (MMKPEFFCFSGFCVYFLFLQVVVSS). In terms of domain architecture, Ig-like V-type spans 26 to 141 (EKLRVTTPTR…DAAIMNLNVT (116 aa)). Residues 26–248 (EKLRVTTPTR…FNRDRIWMES (223 aa)) are Extracellular-facing. A disulfide bond links cysteine 49 and cysteine 123. 2 N-linked (GlcNAc...) asparagine glycosylation sites follow: asparagine 92 and asparagine 139. The 92-residue stretch at 142 to 233 (AVGLETEIHV…TGEEKQTSII (92 aa)) folds into the Ig-like C1-type domain. An intrachain disulfide couples cysteine 163 to cysteine 217. A helical membrane pass occupies residues 249–269 (LASIVWIMLSVYILYIICFYW). Topologically, residues 270–287 (RTGCASGCLSKCFCVVTS) are cytoplasmic. A helical transmembrane segment spans residues 288–308 (WPVQIVHLLFCTGTFFAIYLP). Topologically, residues 309 to 329 (HRSRVSLSDPQFPLYNNWITE) are extracellular. The helical transmembrane segment at 330–350 (LLFVILFLTICFALPIILLFI) threads the bilayer. At 351-395 (QFQFTSLTKWEKNKDGIMDQPRLGKAHETSSLYRKKTGKSWEQEK) the chain is on the cytoplasmic side. A disordered region spans residues 371-395 (PRLGKAHETSSLYRKKTGKSWEQEK).

It belongs to the SKINT family. Expressed in skin, thymus, testis and, to a lower extent, bladder.

The protein localises to the membrane. Its function is as follows. May act by engaging a cell surface molecule on immature T-cells in the embryonic thymus. This chain is Selection and upkeep of intraepithelial T-cells protein 7 (Skint7), found in Mus musculus (Mouse).